The following is a 370-amino-acid chain: Aldo-keto reductase NECHADRAFT_45914 (370 aa).

Asp78 contributes to the NADP(+) binding site. The active-site Proton donor is Tyr83. Residue His174 participates in substrate binding. NADP(+) is bound by residues 204–205 (SS), Gln230, 259–269 (APLASGRLARR), and 333–341 (STVQRIEEA).

The protein belongs to the aldo/keto reductase family.

It participates in secondary metabolite biosynthesis. Its function is as follows. Aldo-keto reductase; part of the gene cluster that mediates the biosynthesis of sansalvamide, a cyclic pentadepsipeptide that shows promising results as potential anti-cancer drug. The nonribosmal peptide synthetase NRPS30 produces sansalvamide by incorporating successively one phenylalanine, one leucine, one alpha-hydroxyisocaproic acid (HICA), one valine and one leucine before sansalvamide is released from by cyclization by the terminal C domain of NRPS30. The HICA residue is probably provided by reduction of alpha-ketoisocaproate by the cluster-specific aldo-keto reductase (NECHADRAFT_45914). The polypeptide is Aldo-keto reductase NECHADRAFT_45914 (Fusarium vanettenii (strain ATCC MYA-4622 / CBS 123669 / FGSC 9596 / NRRL 45880 / 77-13-4) (Fusarium solani subsp. pisi)).